Here is a 712-residue protein sequence, read N- to C-terminus: DNA topoisomerase 3 (712 aa).

A Toprim domain is found at 2 to 135; sequence KSLIIAEKPS…TKRLWISSVT (134 aa). Mg(2+)-binding residues include E8 and D104. The region spanning 152–581 is the Topo IA-type catalytic domain; the sequence is FNNLYHAALA…EMKAFTNQVV (430 aa). Residues 186–191 are interaction with DNA; that stretch reads SLGRVQ. Catalysis depends on Y305, which acts as the O-(5'-phospho-DNA)-tyrosine intermediate.

The protein belongs to the type IA topoisomerase family. Mg(2+) serves as cofactor.

The catalysed reaction is ATP-independent breakage of single-stranded DNA, followed by passage and rejoining.. Releases the supercoiling and torsional tension of DNA, which is introduced during the DNA replication and transcription, by transiently cleaving and rejoining one strand of the DNA duplex. Introduces a single-strand break via transesterification at a target site in duplex DNA. The scissile phosphodiester is attacked by the catalytic tyrosine of the enzyme, resulting in the formation of a DNA-(5'-phosphotyrosyl)-enzyme intermediate and the expulsion of a 3'-OH DNA strand. The free DNA strand then undergoes passage around the unbroken strand, thus removing DNA supercoils. Finally, in the religation step, the DNA 3'-OH attacks the covalent intermediate to expel the active-site tyrosine and restore the DNA phosphodiester backbone. The polypeptide is DNA topoisomerase 3 (Staphylococcus saprophyticus subsp. saprophyticus (strain ATCC 15305 / DSM 20229 / NCIMB 8711 / NCTC 7292 / S-41)).